Reading from the N-terminus, the 237-residue chain is UDP-2,3-diacylglucosamine hydrolase (237 aa).

Asp8, His10, Asp41, Asn78, and His113 together coordinate Mn(2+). Residue 78–79 (NR) coordinates substrate. Substrate is bound by residues Asp121, Ser159, Gln164, and His195. The Mn(2+) site is built by His195 and His197.

This sequence belongs to the LpxH family. Mn(2+) serves as cofactor.

It is found in the cell inner membrane. The enzyme catalyses UDP-2-N,3-O-bis[(3R)-3-hydroxytetradecanoyl]-alpha-D-glucosamine + H2O = 2-N,3-O-bis[(3R)-3-hydroxytetradecanoyl]-alpha-D-glucosaminyl 1-phosphate + UMP + 2 H(+). Its pathway is glycolipid biosynthesis; lipid IV(A) biosynthesis; lipid IV(A) from (3R)-3-hydroxytetradecanoyl-[acyl-carrier-protein] and UDP-N-acetyl-alpha-D-glucosamine: step 4/6. In terms of biological role, hydrolyzes the pyrophosphate bond of UDP-2,3-diacylglucosamine to yield 2,3-diacylglucosamine 1-phosphate (lipid X) and UMP by catalyzing the attack of water at the alpha-P atom. Involved in the biosynthesis of lipid A, a phosphorylated glycolipid that anchors the lipopolysaccharide to the outer membrane of the cell. This Chromobacterium violaceum (strain ATCC 12472 / DSM 30191 / JCM 1249 / CCUG 213 / NBRC 12614 / NCIMB 9131 / NCTC 9757 / MK) protein is UDP-2,3-diacylglucosamine hydrolase.